Here is a 523-residue protein sequence, read N- to C-terminus: Glycerate kinase (523 aa).

Serine 60 is subject to Phosphoserine. N6-acetyllysine is present on lysine 200.

Belongs to the glycerate kinase type-2 family. Expressed in the hippocampus, callus, brain, cerebellum, renal cortex interstitial cells, epithelium of interlobular bile duct and skeletal muscle.

It is found in the cytoplasm. It carries out the reaction (R)-glycerate + ATP = (2R)-3-phosphoglycerate + ADP + H(+). The chain is Glycerate kinase (Glyctk) from Mus musculus (Mouse).